We begin with the raw amino-acid sequence, 320 residues long: Short-chain dehydrogenase TIC 32 B, chloroplastic (320 aa).

Residues 40–46 (GGTSGIG), 92–93 (DL), Asn-119, and Thr-140 each bind NADP(+). Residue Ser-174 participates in substrate binding. Tyr-196 serves as the catalytic Proton acceptor. An interaction with calmodulin region spans residues 301-317 (DTTLADKLWDFSIKLVD).

The protein belongs to the short-chain dehydrogenases/reductases (SDR) family. In terms of assembly, part of the Tic complex.

The protein resides in the plastid. Its subcellular location is the chloroplast inner membrane. Its function is as follows. Involved in protein precursor import into chloroplasts. This chain is Short-chain dehydrogenase TIC 32 B, chloroplastic, found in Brassica napus (Rape).